A 389-amino-acid polypeptide reads, in one-letter code: Cellobiose 2-epimerase (389 aa).

This sequence belongs to the cellobiose 2-epimerase family.

It carries out the reaction D-cellobiose = beta-D-glucosyl-(1-&gt;4)-D-mannopyranose. Catalyzes the reversible epimerization of cellobiose to 4-O-beta-D-glucopyranosyl-D-mannose (Glc-Man). This Ruminococcus albus (strain ATCC 27210 / DSM 20455 / JCM 14654 / NCDO 2250 / 7) protein is Cellobiose 2-epimerase.